We begin with the raw amino-acid sequence, 600 residues long: Aspartate--tRNA(Asp/Asn) ligase (600 aa).

Glu187 is a binding site for L-aspartate. Positions 211 to 214 are aspartate; that stretch reads QIFK. Positions 233 and 463 each coordinate L-aspartate. Position 233 to 235 (233 to 235) interacts with ATP; the sequence is RDE. Position 497 (Glu497) interacts with ATP. Arg504 provides a ligand contact to L-aspartate. 549 to 552 serves as a coordination point for ATP; that stretch reads GVDR.

It belongs to the class-II aminoacyl-tRNA synthetase family. Type 1 subfamily. Homodimer.

It localises to the cytoplasm. It catalyses the reaction tRNA(Asx) + L-aspartate + ATP = L-aspartyl-tRNA(Asx) + AMP + diphosphate. Aspartyl-tRNA synthetase with relaxed tRNA specificity since it is able to aspartylate not only its cognate tRNA(Asp) but also tRNA(Asn). Reaction proceeds in two steps: L-aspartate is first activated by ATP to form Asp-AMP and then transferred to the acceptor end of tRNA(Asp/Asn). The protein is Aspartate--tRNA(Asp/Asn) ligase of Wolbachia pipientis subsp. Culex pipiens (strain wPip).